Here is a 477-residue protein sequence, read N- to C-terminus: Glycogen synthase (477 aa).

An ADP-alpha-D-glucose-binding site is contributed by lysine 15.

The protein belongs to the glycosyltransferase 1 family. Bacterial/plant glycogen synthase subfamily.

The catalysed reaction is [(1-&gt;4)-alpha-D-glucosyl](n) + ADP-alpha-D-glucose = [(1-&gt;4)-alpha-D-glucosyl](n+1) + ADP + H(+). Its pathway is glycan biosynthesis; glycogen biosynthesis. Functionally, synthesizes alpha-1,4-glucan chains using ADP-glucose. This Salmonella choleraesuis (strain SC-B67) protein is Glycogen synthase.